The chain runs to 197 residues: CASP-like protein 1B2 (197 aa).

Ala-2 carries the post-translational modification N-acetylalanine. The Cytoplasmic segment spans residues 2–17 (AREKIVVAGGSTKSWK). The helical transmembrane segment at 18–38 (LLLGLRVFAFMATLAAAIVMS) threads the bilayer. At 39 to 69 (LNKETKTLVVATIGTLPIKATLTAKFQDTPA) the chain is on the extracellular side. A helical transmembrane segment spans residues 70-90 (FVFFVIANVMVSFHNLLMIVL). At 91–106 (QIFSRKLEYKGVRLLS) the chain is on the cytoplasmic side. The chain crosses the membrane as a helical span at residues 107 to 127 (IAILDMLNATLVSAAANAAVF). At 128–156 (VAELGKNGNKHAKWNKVCDRFATYCDHGA) the chain is on the extracellular side. The chain crosses the membrane as a helical span at residues 157 to 177 (GALIAAFAGVILMLLVSSVSI). The Cytoplasmic segment spans residues 178-197 (SRLLINSKHLSTTATTTAVV).

This sequence belongs to the Casparian strip membrane proteins (CASP) family. As to quaternary structure, homodimer and heterodimers.

Its subcellular location is the cell membrane. The protein is CASP-like protein 1B2 of Arabidopsis lyrata subsp. lyrata (Lyre-leaved rock-cress).